A 352-amino-acid polypeptide reads, in one-letter code: Cobalt transport protein NhlF (352 aa).

The next 8 helical transmembrane spans lie at 23–43, 46–66, 95–115, 131–151, 206–226, 230–250, 290–310, and 323–343; these read LASVVGAIVILHVLGVALYLG, GNPAAAGGLAGSGVLAYVLGV, VGFFFAMGHSTVVVVLALVVA, EIGGLVATVVAVTFLSIVAGL, PVGLLMGLGLETASEVTLLTL, AATGGTLSIAAVLSLPLLFAA, VIGLFVAGIYVCALLAHLPMF, and FEFLGYAVAAAFILTWTGALL.

This sequence belongs to the NiCoT transporter (TC 2.A.52) family.

The protein localises to the cell membrane. Its activity is regulated as follows. Cobalt uptake is inhibited by uncouplers (CCCP and 3,5-di-tert-butyl-4-hydroxybenzylidenemalononitrile) and by the addition of excess nickel. Its function is as follows. Mediates energy-dependent uptake of cobalt ions into the cell. Can also transport nickel ions, but cobalt is the preferred substrate. The chain is Cobalt transport protein NhlF (nhlF) from Rhodococcus rhodochrous.